Here is a 398-residue protein sequence, read N- to C-terminus: Argininosuccinate synthase (398 aa).

8-16 (AYSGGLDTS) provides a ligand contact to ATP. Residue Tyr-87 participates in L-citrulline binding. Gly-117 lines the ATP pocket. 3 residues coordinate L-aspartate: Thr-119, Asn-123, and Asp-124. Asn-123 provides a ligand contact to L-citrulline. The L-citrulline site is built by Arg-127, Ser-175, Glu-260, and Tyr-272.

This sequence belongs to the argininosuccinate synthase family. Type 1 subfamily. In terms of assembly, homotetramer.

Its subcellular location is the cytoplasm. It carries out the reaction L-citrulline + L-aspartate + ATP = 2-(N(omega)-L-arginino)succinate + AMP + diphosphate + H(+). Its pathway is amino-acid biosynthesis; L-arginine biosynthesis; L-arginine from L-ornithine and carbamoyl phosphate: step 2/3. In Mycobacterium avium (strain 104), this protein is Argininosuccinate synthase.